A 467-amino-acid chain; its full sequence is Ribulose bisphosphate carboxylase large chain (467 aa).

Lysine 5 is modified (N6,N6,N6-trimethyllysine). 2 residues coordinate substrate: asparagine 114 and threonine 164. The Proton acceptor role is filled by lysine 166. Residue lysine 168 coordinates substrate. Mg(2+) contacts are provided by lysine 192, aspartate 194, and glutamate 195. Lysine 192 carries the post-translational modification N6-carboxylysine. Histidine 285 serves as the catalytic Proton acceptor. Residues arginine 286, histidine 318, and serine 370 each coordinate substrate.

It belongs to the RuBisCO large chain family. Type I subfamily. In terms of assembly, heterohexadecamer of 8 large chains and 8 small chains; disulfide-linked. The disulfide link is formed within the large subunit homodimers. Requires Mg(2+) as cofactor. The disulfide bond which can form in the large chain dimeric partners within the hexadecamer appears to be associated with oxidative stress and protein turnover.

The protein localises to the plastid. It localises to the chloroplast. The enzyme catalyses 2 (2R)-3-phosphoglycerate + 2 H(+) = D-ribulose 1,5-bisphosphate + CO2 + H2O. The catalysed reaction is D-ribulose 1,5-bisphosphate + O2 = 2-phosphoglycolate + (2R)-3-phosphoglycerate + 2 H(+). RuBisCO catalyzes two reactions: the carboxylation of D-ribulose 1,5-bisphosphate, the primary event in carbon dioxide fixation, as well as the oxidative fragmentation of the pentose substrate in the photorespiration process. Both reactions occur simultaneously and in competition at the same active site. This is Ribulose bisphosphate carboxylase large chain from Scutellaria bolanderi (Sierra skullcap).